The sequence spans 270 residues: Imidazole glycerol phosphate synthase subunit HisF (270 aa).

Residues aspartate 11 and aspartate 130 contribute to the active site.

Belongs to the HisA/HisF family. In terms of assembly, heterodimer of HisH and HisF.

The protein localises to the cytoplasm. The enzyme catalyses 5-[(5-phospho-1-deoxy-D-ribulos-1-ylimino)methylamino]-1-(5-phospho-beta-D-ribosyl)imidazole-4-carboxamide + L-glutamine = D-erythro-1-(imidazol-4-yl)glycerol 3-phosphate + 5-amino-1-(5-phospho-beta-D-ribosyl)imidazole-4-carboxamide + L-glutamate + H(+). Its pathway is amino-acid biosynthesis; L-histidine biosynthesis; L-histidine from 5-phospho-alpha-D-ribose 1-diphosphate: step 5/9. Functionally, IGPS catalyzes the conversion of PRFAR and glutamine to IGP, AICAR and glutamate. The HisF subunit catalyzes the cyclization activity that produces IGP and AICAR from PRFAR using the ammonia provided by the HisH subunit. The polypeptide is Imidazole glycerol phosphate synthase subunit HisF (Sorangium cellulosum (strain So ce56) (Polyangium cellulosum (strain So ce56))).